The primary structure comprises 305 residues: Serine/threonine-protein phosphatase ppe1 (305 aa).

Mn(2+) is bound by residues Asp-51, His-53, Asp-79, and Asn-111. His-112 serves as the catalytic Proton donor. Residues His-161 and His-235 each contribute to the Mn(2+) site.

It belongs to the PPP phosphatase family. PP-6 (PP-V) subfamily. As to quaternary structure, interacts with sts5, ekc1 and mis12. Mn(2+) is required as a cofactor.

It localises to the nucleus. It catalyses the reaction O-phospho-L-seryl-[protein] + H2O = L-seryl-[protein] + phosphate. It carries out the reaction O-phospho-L-threonyl-[protein] + H2O = L-threonyl-[protein] + phosphate. Has a role in chromosome segregation. May provide a dynamic connection between kinetochore microtubules and kinetochore chromatin. Negatively regulates mis12. The sequence is that of Serine/threonine-protein phosphatase ppe1 (ppe1) from Schizosaccharomyces pombe (strain 972 / ATCC 24843) (Fission yeast).